The sequence spans 215 residues: FBD domain-containing protein At3g58975 (215 aa).

The FBD domain maps to 122–199; that stretch reads RSLTSCPVKK…KLSSCNVQLL (78 aa).

This is FBD domain-containing protein At3g58975 from Arabidopsis thaliana (Mouse-ear cress).